The chain runs to 141 residues: VLSPTDKTNVKTAWSHVGAHAGEYGAEALERMFLSFPTTKTYFPHFDLSHGSAQVKAHGKKVGDALTQAVGHLDDLPGALSALSDLHAYKLRVDPVNFKLLSHCLLVTLALHNPQDFTPAVHASLDKFLSNVSTVLTSKYR.

The Globin domain occupies 1 to 141; sequence VLSPTDKTNV…VSTVLTSKYR (141 aa). Residue serine 3 is modified to Phosphoserine. Lysine 7 carries the N6-succinyllysine modification. Position 8 is a phosphothreonine (threonine 8). Position 11 is an N6-succinyllysine (lysine 11). Tyrosine 24 bears the Phosphotyrosine mark. The residue at position 35 (serine 35) is a Phosphoserine. Lysine 40 is subject to N6-succinyllysine. Serine 49 is subject to Phosphoserine. Histidine 58 serves as a coordination point for O2. Histidine 87 serves as a coordination point for heme b. Residue serine 102 is modified to Phosphoserine. Threonine 108 carries the post-translational modification Phosphothreonine. A Phosphoserine modification is found at serine 124. Phosphothreonine is present on residues threonine 134 and threonine 137. Residue serine 138 is modified to Phosphoserine.

It belongs to the globin family. As to quaternary structure, heterotetramer of two alpha chains and two beta chains. As to expression, red blood cells.

Involved in oxygen transport from the lung to the various peripheral tissues. Its function is as follows. Hemopressin acts as an antagonist peptide of the cannabinoid receptor CNR1. Hemopressin-binding efficiently blocks cannabinoid receptor CNR1 and subsequent signaling. In Rhinoceros unicornis (Greater Indian rhinoceros), this protein is Hemoglobin subunit alpha (HBA).